The sequence spans 779 residues: Putative helicase V13 (779 aa).

Positions 477–642 (DNPKPFITSL…FVKEEELNEK (166 aa)) constitute an SF3 helicase domain. Residue 504-511 (GKSNAGKS) participates in ATP binding.

In Acanthamoeba polyphaga (Amoeba), this protein is Putative helicase V13.